The primary structure comprises 626 residues: Threonine--tRNA ligase (626 aa).

The interval 1–144 (MRMLLIHADY…LSRTIVPEEG (144 aa)) is editing domain. The segment at 207-506 (PHVRLMLEHE…QAQGKKPMFP (300 aa)) is catalytic. Zn(2+)-binding residues include Cys-299, His-351, and His-475.

Belongs to the class-II aminoacyl-tRNA synthetase family. In terms of assembly, homodimer. Zn(2+) serves as cofactor.

It is found in the cytoplasm. It carries out the reaction tRNA(Thr) + L-threonine + ATP = L-threonyl-tRNA(Thr) + AMP + diphosphate + H(+). Catalyzes the attachment of threonine to tRNA(Thr) in a two-step reaction: L-threonine is first activated by ATP to form Thr-AMP and then transferred to the acceptor end of tRNA(Thr). Also edits incorrectly charged L-seryl-tRNA(Thr). This Thermococcus gammatolerans (strain DSM 15229 / JCM 11827 / EJ3) protein is Threonine--tRNA ligase.